The chain runs to 178 residues: MPLRPGRCYRHFSGPAYTRKEYIPGIPQPKITKFTSGNPNGDYDYEVRLITTEIGQIRHNALEAVRTLTLKTLSKKTGSETSFFMWILKYPHHVLRENKMMAFAGADRLQDGMRLSFGTPIGTAARIEKLGETLIVIKVKKEHLEFAKEALKIASKKLPLRTRIEIIPLRLVRQEVQS.

The protein belongs to the universal ribosomal protein uL16 family.

The sequence is that of Large ribosomal subunit protein uL16 from Saccharolobus solfataricus (strain ATCC 35092 / DSM 1617 / JCM 11322 / P2) (Sulfolobus solfataricus).